The sequence spans 303 residues: Methionyl-tRNA formyltransferase (303 aa).

108 to 111 contributes to the (6S)-5,6,7,8-tetrahydrofolate binding site; it reads SDLP.

The protein belongs to the Fmt family.

The enzyme catalyses L-methionyl-tRNA(fMet) + (6R)-10-formyltetrahydrofolate = N-formyl-L-methionyl-tRNA(fMet) + (6S)-5,6,7,8-tetrahydrofolate + H(+). Functionally, attaches a formyl group to the free amino group of methionyl-tRNA(fMet). The formyl group appears to play a dual role in the initiator identity of N-formylmethionyl-tRNA by promoting its recognition by IF2 and preventing the misappropriation of this tRNA by the elongation apparatus. The chain is Methionyl-tRNA formyltransferase from Rickettsia typhi (strain ATCC VR-144 / Wilmington).